Reading from the N-terminus, the 245-residue chain is 1-(5-phosphoribosyl)-5-[(5-phosphoribosylamino)methylideneamino] imidazole-4-carboxamide isomerase (245 aa).

Asp-10 (proton acceptor) is an active-site residue. Asp-135 acts as the Proton donor in catalysis.

It belongs to the HisA/HisF family.

It localises to the cytoplasm. It carries out the reaction 1-(5-phospho-beta-D-ribosyl)-5-[(5-phospho-beta-D-ribosylamino)methylideneamino]imidazole-4-carboxamide = 5-[(5-phospho-1-deoxy-D-ribulos-1-ylimino)methylamino]-1-(5-phospho-beta-D-ribosyl)imidazole-4-carboxamide. It participates in amino-acid biosynthesis; L-histidine biosynthesis; L-histidine from 5-phospho-alpha-D-ribose 1-diphosphate: step 4/9. This Methanosarcina barkeri (strain Fusaro / DSM 804) protein is 1-(5-phosphoribosyl)-5-[(5-phosphoribosylamino)methylideneamino] imidazole-4-carboxamide isomerase.